The following is a 149-amino-acid chain: Histone H2A (149 aa).

Over residues 1-23 (METAGKAKKGFGGRKGGPRKKSV) the composition is skewed to basic residues. Disordered stretches follow at residues 1 to 25 (METAGKAKKGFGGRKGGPRKKSVTR) and 127 to 149 (KTAEKAAKEPKSPSKAGKSPKKA). The segment covering 127–138 (KTAEKAAKEPKS) has biased composition (basic and acidic residues). 2 consecutive short sequence motifs (SPKK motif) follow at residues 138–141 (SPSK) and 145–148 (SPKK).

The protein belongs to the histone H2A family. As to quaternary structure, the nucleosome is a histone octamer containing two molecules each of H2A, H2B, H3 and H4 assembled in one H3-H4 heterotetramer and two H2A-H2B heterodimers. The octamer wraps approximately 147 bp of DNA.

Its subcellular location is the nucleus. The protein localises to the chromosome. In terms of biological role, core component of nucleosome. Nucleosomes wrap and compact DNA into chromatin, limiting DNA accessibility to the cellular machineries which require DNA as a template. Histones thereby play a central role in transcription regulation, DNA repair, DNA replication and chromosomal stability. DNA accessibility is regulated via a complex set of post-translational modifications of histones, also called histone code, and nucleosome remodeling. The sequence is that of Histone H2A from Petroselinum crispum (Parsley).